Consider the following 244-residue polypeptide: B3 domain-containing protein At2g36080 (244 aa).

A DNA-binding region (TF-B3) is located at residues 38–144; that stretch reads FEKPLTPSDV…RFFIGWRRRG (107 aa).

Its subcellular location is the nucleus. This Arabidopsis thaliana (Mouse-ear cress) protein is B3 domain-containing protein At2g36080 (ARF31).